Consider the following 514-residue polypeptide: uncharacterized protein (514 aa).

3 disordered regions span residues 1-68 (MSSP…SESE), 109-244 (VPPP…RQAS), and 272-484 (RPAV…AQGC). Basic residues predominate over residues 368-384 (KPQKPKHSSPGKKPAGR). The span at 385–405 (KTRESQAAAREDNDPNRDEVP) shows a compositional bias: basic and acidic residues.

This is an uncharacterized protein from Homo sapiens (Human).